Consider the following 1721-residue polypeptide: Ras guanine nucleotide exchange factor R (1721 aa).

Residues 148–279 (QLEDEVDLVH…LQQQQQQQRS (132 aa)) are a coiled coil. 6 disordered regions span residues 213 to 232 (QQQK…KEEK), 445 to 515 (SSLG…NQQP), 551 to 701 (ATTT…VDKQ), 716 to 766 (RTPL…KSPS), 797 to 837 (TITI…TPNK), and 929 to 981 (DEVS…DPVS). The span at 216-232 (KHQEEKEKNDQKEKEEK) shows a compositional bias: basic and acidic residues. Composition is skewed to low complexity over residues 454–469 (SPEK…STSE), 479–493 (HNNN…STNN), 501–515 (PSLS…NQQP), and 551–581 (ATTT…LSIS). Polar residues predominate over residues 618–627 (NGTTSPRNNE). Composition is skewed to low complexity over residues 628 to 651 (SSVT…VNTI) and 663 to 686 (TPTT…SQND). Basic and acidic residues predominate over residues 687–701 (KQNENNNKENFVDKQ). Composition is skewed to low complexity over residues 724–748 (SSNS…TNSS), 797–836 (TITI…TTPN), and 933–952 (ESSS…NTPS). Residues 802-831 (NNNNNNNNNNNNNNNNNNNIQQQQQQQQQI) adopt a coiled-coil conformation. Positions 968-978 (NLSSINNSSYD) are enriched in polar residues. Residues 1291–1411 (GRYVPKAGTL…ILGGLIKKKE (121 aa)) enclose the N-terminal Ras-GEF domain. The Ras-GEF domain occupies 1447–1676 (NESEIARQLT…YQLSLIREPR (230 aa)).

In terms of processing, phosphorylated on threonine residues.

Functionally, promotes the exchange of Ras-bound GDP by GTP. May also play a role in the activation of rasG. This is Ras guanine nucleotide exchange factor R (gefR) from Dictyostelium discoideum (Social amoeba).